Reading from the N-terminus, the 234-residue chain is Ribosomal RNA small subunit methyltransferase G (234 aa).

S-adenosyl-L-methionine contacts are provided by residues Gly74, Phe79, 125–126, and Arg144; that span reads AE.

This sequence belongs to the methyltransferase superfamily. RNA methyltransferase RsmG family.

The protein resides in the cytoplasm. Specifically methylates the N7 position of a guanine in 16S rRNA. This chain is Ribosomal RNA small subunit methyltransferase G, found in Roseiflexus sp. (strain RS-1).